We begin with the raw amino-acid sequence, 586 residues long: Germ cell nuclear acidic protein (586 aa).

Disordered regions lie at residues 17-119 (GWDR…LSSE), 176-202 (KAKT…SPVF), 217-266 (TWRT…SSEE), and 279-318 (LGGR…PVKD). The span at 65 to 76 (SGKENRSQEEHI) shows a compositional bias: basic and acidic residues. Polar residues predominate over residues 94 to 107 (TPKSTFKQSASSAQ). Over residues 176-191 (KAKTVKTPKSVQKTKK) the composition is skewed to basic residues. A compositionally biased stretch (basic and acidic residues) spans 225–244 (PPSDEHQATSKDREETEKPR). Polar residues predominate over residues 299-313 (CLSTPSATGRKTGSQ). Residues 383–482 (KLYQLYNTSV…LYARKAMLAH (100 aa)) enclose the SprT-like domain.

This sequence belongs to the serine-aspartate repeat-containing protein (SDr) family.

The protein localises to the nucleus. It localises to the PML body. Its subcellular location is the chromosome. In terms of biological role, may play a role in DNA-protein cross-links (DPCs) clearance, ensuring the genomic stability by protecting germ cells and early embryos from various sources of damage. The sequence is that of Germ cell nuclear acidic protein (gcna) from Danio rerio (Zebrafish).